The primary structure comprises 77 residues: Probable Fe(2+)-trafficking protein (77 aa).

This sequence belongs to the Fe(2+)-trafficking protein family.

Functionally, could be a mediator in iron transactions between iron acquisition and iron-requiring processes, such as synthesis and/or repair of Fe-S clusters in biosynthetic enzymes. The polypeptide is Probable Fe(2+)-trafficking protein (Baumannia cicadellinicola subsp. Homalodisca coagulata).